The following is a 320-amino-acid chain: o-succinylbenzoate synthase (320 aa).

Lys133 functions as the Proton donor in the catalytic mechanism. Asp161, Glu190, and Asp213 together coordinate Mg(2+). Lys235 (proton acceptor) is an active-site residue.

This sequence belongs to the mandelate racemase/muconate lactonizing enzyme family. MenC type 1 subfamily. A divalent metal cation is required as a cofactor.

The enzyme catalyses (1R,6R)-6-hydroxy-2-succinyl-cyclohexa-2,4-diene-1-carboxylate = 2-succinylbenzoate + H2O. It functions in the pathway quinol/quinone metabolism; 1,4-dihydroxy-2-naphthoate biosynthesis; 1,4-dihydroxy-2-naphthoate from chorismate: step 4/7. The protein operates within quinol/quinone metabolism; menaquinone biosynthesis. Converts 2-succinyl-6-hydroxy-2,4-cyclohexadiene-1-carboxylate (SHCHC) to 2-succinylbenzoate (OSB). This Escherichia coli O6:H1 (strain CFT073 / ATCC 700928 / UPEC) protein is o-succinylbenzoate synthase.